The chain runs to 95 residues: Protein E7 (95 aa).

Positions 1–41 (MHGNVATIEDIVLDLKPEPFDLYCREQLEDSDAEDETAVTQ) are E7 terminal domain. The LXCXE motif; interaction with host RB1 and TMEM173/STING motif lies at 22 to 26 (LYCRE). The segment at 53-91 (CGGVCCKTVRLCVYSTHTGIRVLQELLHQDALQIVCPTC) is a zinc-finger region. The short motif at 72–80 (IRVLQELLH) is the Nuclear export signal element.

The protein belongs to the papillomaviridae E7 protein family. In terms of assembly, homodimer. Homooligomer. Interacts with host RB1; this interaction induces dissociation of RB1-E2F1 complex thereby disrupting RB1 activity. Interacts with host EP300; this interaction represses EP300 transcriptional activity. Interacts with protein E2; this interaction inhibits E7 oncogenic activity. Interacts with host TMEM173/STING; this interaction impairs the ability of TMEM173/STING to sense cytosolic DNA and promote the production of type I interferon (IFN-alpha and IFN-beta). Post-translationally, highly phosphorylated.

It localises to the host cytoplasm. The protein localises to the host nucleus. Plays a role in viral genome replication by driving entry of quiescent cells into the cell cycle. Stimulation of progression from G1 to S phase allows the virus to efficiently use the cellular DNA replicating machinery to achieve viral genome replication. E7 protein has both transforming and trans-activating activities. Induces the disassembly of the E2F1 transcription factor from RB1, with subsequent transcriptional activation of E2F1-regulated S-phase genes. Interferes with host histone deacetylation mediated by HDAC1 and HDAC2, leading to transcription activation. Also plays a role in the inhibition of both antiviral and antiproliferative functions of host interferon alpha. Interaction with host TMEM173/STING impairs the ability of TMEM173/STING to sense cytosolic DNA and promote the production of type I interferon (IFN-alpha and IFN-beta). The protein is Protein E7 of Human papillomavirus type 54.